A 448-amino-acid polypeptide reads, in one-letter code: tRNA(Ile)-lysidine synthase (448 aa).

25–30 (SGGSDS) is an ATP binding site.

It belongs to the tRNA(Ile)-lysidine synthase family.

The protein resides in the cytoplasm. It catalyses the reaction cytidine(34) in tRNA(Ile2) + L-lysine + ATP = lysidine(34) in tRNA(Ile2) + AMP + diphosphate + H(+). In terms of biological role, ligates lysine onto the cytidine present at position 34 of the AUA codon-specific tRNA(Ile) that contains the anticodon CAU, in an ATP-dependent manner. Cytidine is converted to lysidine, thus changing the amino acid specificity of the tRNA from methionine to isoleucine. The sequence is that of tRNA(Ile)-lysidine synthase from Brucella abortus (strain S19).